The primary structure comprises 360 residues: DNA replication and repair protein RecF (360 aa).

30-37 (GQNGSGKT) contributes to the ATP binding site.

The protein belongs to the RecF family.

It is found in the cytoplasm. Its function is as follows. The RecF protein is involved in DNA metabolism; it is required for DNA replication and normal SOS inducibility. RecF binds preferentially to single-stranded, linear DNA. It also seems to bind ATP. This is DNA replication and repair protein RecF from Shewanella sp. (strain MR-7).